We begin with the raw amino-acid sequence, 700 residues long: Elongation factor G 1 (700 aa).

In terms of domain architecture, tr-type G spans 8-290 (ERYRNIGISA…AVIEYLPSPI (283 aa)). GTP is bound by residues 17-24 (AHIDAGKT), 88-92 (DTPGH), and 142-145 (NKMD).

It belongs to the TRAFAC class translation factor GTPase superfamily. Classic translation factor GTPase family. EF-G/EF-2 subfamily.

It localises to the cytoplasm. Its function is as follows. Catalyzes the GTP-dependent ribosomal translocation step during translation elongation. During this step, the ribosome changes from the pre-translocational (PRE) to the post-translocational (POST) state as the newly formed A-site-bound peptidyl-tRNA and P-site-bound deacylated tRNA move to the P and E sites, respectively. Catalyzes the coordinated movement of the two tRNA molecules, the mRNA and conformational changes in the ribosome. The chain is Elongation factor G 1 from Bordetella avium (strain 197N).